Reading from the N-terminus, the 351-residue chain is Peptide chain release factor 1 (351 aa).

N5-methylglutamine is present on glutamine 229.

The protein belongs to the prokaryotic/mitochondrial release factor family. In terms of processing, methylated by PrmC. Methylation increases the termination efficiency of RF1.

The protein resides in the cytoplasm. Its function is as follows. Peptide chain release factor 1 directs the termination of translation in response to the peptide chain termination codons UAG and UAA. The polypeptide is Peptide chain release factor 1 (Dinoroseobacter shibae (strain DSM 16493 / NCIMB 14021 / DFL 12)).